Reading from the N-terminus, the 157-residue chain is Ribonuclease H (157 aa).

Residues 1 to 146 (MPELFAYTDG…ADALAREGMA (146 aa)) enclose the RNase H type-1 domain. The Mg(2+) site is built by Asp-9, Glu-52, Asp-74, and Asp-138.

Belongs to the RNase H family. As to quaternary structure, monomer. The cofactor is Mg(2+).

It localises to the cytoplasm. It carries out the reaction Endonucleolytic cleavage to 5'-phosphomonoester.. Endonuclease that specifically degrades the RNA of RNA-DNA hybrids. In Dinoroseobacter shibae (strain DSM 16493 / NCIMB 14021 / DFL 12), this protein is Ribonuclease H.